The sequence spans 205 residues: Metalloproteinase inhibitor 1 (205 aa).

Residues 1-24 (MMAPFASLASGILLLLSLIASSKA) form the signal peptide. Zn(2+) is bound at residue C25. The interval 25-28 (CSCA) is involved in metalloproteinase-binding. Disulfide bonds link C25–C94, C27–C123, C37–C148, C151–C197, C156–C161, and C169–C189. Residues 25–148 (CSCAPPHPQT…AFSKTYSAGC (124 aa)) form the NTR domain. The N-linked (GlcNAc...) asparagine glycan is linked to N54. Residues 91–92 (ES) are involved in metalloproteinase-binding. N-linked (GlcNAc...) asparagine glycosylation is present at N102. S179 carries the phosphoserine modification.

This sequence belongs to the protease inhibitor I35 (TIMP) family. As to quaternary structure, interacts with MMP1, MMP3, MMP10 and MMP13, but has only very low affinity for MMP14. Interacts with CD63; identified in a complex with CD63 and ITGB1. Post-translationally, the activity of TIMP1 is dependent on the presence of disulfide bonds. N-glycosylated. As to expression, found in fetal and adult tissues. Highest levels are found in bone. Also found in lung, ovary and uterus.

Its subcellular location is the secreted. Metalloproteinase inhibitor that functions by forming one to one complexes with target metalloproteinases, such as collagenases, and irreversibly inactivates them by binding to their catalytic zinc cofactor. Acts on MMP1, MMP2, MMP3, MMP7, MMP8, MMP9, MMP10, MMP11, MMP12, MMP13 and MMP16. Does not act on MMP14. Also functions as a growth factor that regulates cell differentiation, migration and cell death and activates cellular signaling cascades via CD63 and ITGB1. Plays a role in integrin signaling. This is Metalloproteinase inhibitor 1 (Timp1) from Mus musculus (Mouse).